The primary structure comprises 335 residues: Protein BRASSINAZOLE-RESISTANT 2 (335 aa).

Positions 1 to 19 (MTSDGATSTSAAAAAAAMA) are enriched in low complexity. Disordered stretches follow at residues 1 to 40 (MTSD…RRRR), 85 to 122 (TYRK…FDSP), and 164 to 190 (PPLR…KPLP). Positions 22-103 (RKPSWREREN…PGDMAGSSSR (82 aa)) are required for DNA-binding. Polar residues predominate over residues 99–120 (GSSSRATPYSSHNQSPLSSTFD). Position 175 is a phosphothreonine (Thr-175). A PEST-like region spans residues 231–251 (HAPATIPECDESDSSTVDSGH).

The protein belongs to the BZR/LAT61 family. Interacts with ASK7/BIN2 through its C-terminal domain and with the bHLH transcription factors BIM1, BIM2 and BIM3 through its C- and N-terminal domains. Interacts (via N-terminus) with REF6 and ELF6. Interacts with MYB30. Interacts with IWS1. Interacts with ASHH2/SDG8. Binds to MYB56 when dephosphorylated in the nucleus of quiescent center (QC) cells. Binds to WRKY46, WRKY54 and WRKY70 to cooperatively regulate the expression of target genes. In terms of processing, phosphorylated by ASK7/BIN2. Phosphorylation increases protein degradation and/or interferes with the nuclear localization. As to expression, ubiquitously expressed in cotyledons, leaves, hypocotyls and roots.

Its subcellular location is the nucleus. The protein localises to the cytoplasm. Functionally, positive regulator of brassinosteroid (BR) signaling. Transcription factor that activates target gene expression by binding specifically to the DNA sequence 5'-CANNTG-3'(E box) through its N-terminal domain. Can bind individually to the promoter as a homodimer or synergistically as a heterodimer with BIM1, BIM2 or BIM3. The C-terminal domain is probably involved in transcriptional activation. Recruits the transcription elongation factor IWS1 to control BR-regulated gene expression. Forms a trimeric complex with IWS1 and ASHH2/SDG8 to regulate BR-regulated gene expression. Promotes quiescent center (QC) self-renewal by cell divisions in the primary root. Binds to the E-boxes of the BRAVO promoter to repress its expression. The polypeptide is Protein BRASSINAZOLE-RESISTANT 2 (Arabidopsis thaliana (Mouse-ear cress)).